We begin with the raw amino-acid sequence, 444 residues long: UDP-N-acetylmuramate--L-alanine ligase (444 aa).

110–116 (GAHGKTS) is a binding site for ATP.

It belongs to the MurCDEF family.

The protein localises to the cytoplasm. It carries out the reaction UDP-N-acetyl-alpha-D-muramate + L-alanine + ATP = UDP-N-acetyl-alpha-D-muramoyl-L-alanine + ADP + phosphate + H(+). Its pathway is cell wall biogenesis; peptidoglycan biosynthesis. In terms of biological role, cell wall formation. This chain is UDP-N-acetylmuramate--L-alanine ligase, found in Streptococcus sanguinis (strain SK36).